The chain runs to 432 residues: Alpha-galactosidase (432 aa).

2–68 serves as a coordination point for NAD(+); the sequence is KKITFIGAGS…PSVAINSYDD (67 aa). Asn-148 contacts substrate. Cys-169 lines the Mn(2+) pocket. The active-site Proton donor is His-170. His-199 is a binding site for Mn(2+).

It belongs to the glycosyl hydrolase 4 family. As to quaternary structure, homodimer. Mn(2+) serves as cofactor. The cofactor is NAD(+).

The protein localises to the cytoplasm. It catalyses the reaction Hydrolysis of terminal, non-reducing alpha-D-galactose residues in alpha-D-galactosides, including galactose oligosaccharides, galactomannans and galactolipids.. Catalyzes the hydrolysis of melibiose and alpha-galactosides of the raffinose family of oligosaccharides (RFOs) such as raffinose and stachyose. Cannot act on polymeric substrates such as locust bean gum. The protein is Alpha-galactosidase of Bacillus subtilis (strain 168).